Consider the following 806-residue polypeptide: Leucine--tRNA ligase (806 aa).

The short motif at 40 to 51 (PYPSGKGLHVGH) is the 'HIGH' region element. The short motif at 580 to 584 (KMSKS) is the 'KMSKS' region element. Lys583 is an ATP binding site.

Belongs to the class-I aminoacyl-tRNA synthetase family.

The protein resides in the cytoplasm. The catalysed reaction is tRNA(Leu) + L-leucine + ATP = L-leucyl-tRNA(Leu) + AMP + diphosphate. The polypeptide is Leucine--tRNA ligase (Ureaplasma urealyticum serovar 10 (strain ATCC 33699 / Western)).